The primary structure comprises 307 residues: 2-carboxy-1,4-naphthoquinone phytyltransferase (307 aa).

The next 8 helical transmembrane spans lie at 27–47 (MYTV…GLTG), 51–71 (GDVF…INLS), 98–118 (LVFL…MSMS), 125–145 (TVLE…GPPF), 147–167 (LGYL…LAIA), 177–197 (FSWN…IILF), 223–243 (LGSQ…AIGV), and 284–304 (FIAV…YGWA).

Belongs to the MenA family. Type 2 subfamily.

The protein resides in the cell inner membrane. The catalysed reaction is 2-carboxy-1,4-naphthoquinone + phytyl diphosphate + H(+) = demethylphylloquinone + CO2 + diphosphate. It participates in cofactor biosynthesis; phylloquinone biosynthesis. In terms of biological role, involved in the synthesis of phylloquinone (vitamin K1). Catalyzes the transfer of a prenyl chain to 2-carboxy-1,4-naphthoquinone. This Synechocystis sp. (strain ATCC 27184 / PCC 6803 / Kazusa) protein is 2-carboxy-1,4-naphthoquinone phytyltransferase.